The chain runs to 158 residues: MRASRSPPSPRRCHHHHEATGAASGAAAGGPGAGCVGLCRLALTPSAQDGRNSTFQTYKKEVCLPRHSMHPGPWAICCECQTRFGGRLPVSRVEAALPYWVPLSLRPRKQHPCWMHAAGTTAGGSAVMSACCPSSSSSRPPTRTSYRLLQRVCCPSAS.

Residues 1–26 (MRASRSPPSPRRCHHHHEATGAASGA) form a disordered region.

This is an uncharacterized protein from Homo sapiens (Human).